The following is a 337-amino-acid chain: Glyceraldehyde-3-phosphate dehydrogenase (337 aa).

Residues 12–13 (RI), Asp34, Arg78, and Thr121 each bind NAD(+). D-glyceraldehyde 3-phosphate is bound by residues 151-153 (SCT), Thr182, Arg199, 212-213 (SG), and Arg235. The active-site Nucleophile is Cys152. Asn317 provides a ligand contact to NAD(+).

This sequence belongs to the glyceraldehyde-3-phosphate dehydrogenase family. As to quaternary structure, homotetramer.

The protein localises to the cytoplasm. It carries out the reaction D-glyceraldehyde 3-phosphate + phosphate + NAD(+) = (2R)-3-phospho-glyceroyl phosphate + NADH + H(+). It participates in carbohydrate degradation; glycolysis; pyruvate from D-glyceraldehyde 3-phosphate: step 1/5. Its function is as follows. Catalyzes the oxidative phosphorylation of glyceraldehyde 3-phosphate (G3P) to 1,3-bisphosphoglycerate (BPG) using the cofactor NAD. The first reaction step involves the formation of a hemiacetal intermediate between G3P and a cysteine residue, and this hemiacetal intermediate is then oxidized to a thioester, with concomitant reduction of NAD to NADH. The reduced NADH is then exchanged with the second NAD, and the thioester is attacked by a nucleophilic inorganic phosphate to produce BPG. The polypeptide is Glyceraldehyde-3-phosphate dehydrogenase (gap) (Lactococcus lactis subsp. lactis (strain IL1403) (Streptococcus lactis)).